Consider the following 327-residue polypeptide: GTP 3',8-cyclase (327 aa).

In terms of domain architecture, Radical SAM core spans 8–232 (AFARKFYYLR…LQRSRSDGPA (225 aa)). Arginine 17 is a binding site for GTP. [4Fe-4S] cluster contacts are provided by cysteine 24 and cysteine 28. Tyrosine 30 is an S-adenosyl-L-methionine binding site. A [4Fe-4S] cluster-binding site is contributed by cysteine 31. Arginine 66 contributes to the GTP binding site. Glycine 70 is an S-adenosyl-L-methionine binding site. Residue threonine 97 coordinates GTP. Serine 121 contacts S-adenosyl-L-methionine. Lysine 158 is a binding site for GTP. An S-adenosyl-L-methionine-binding site is contributed by methionine 192. Positions 255 and 258 each coordinate [4Fe-4S] cluster. A GTP-binding site is contributed by 260–262 (RLR). Cysteine 272 is a [4Fe-4S] cluster binding site.

The protein belongs to the radical SAM superfamily. MoaA family. Monomer and homodimer. The cofactor is [4Fe-4S] cluster.

The enzyme catalyses GTP + AH2 + S-adenosyl-L-methionine = (8S)-3',8-cyclo-7,8-dihydroguanosine 5'-triphosphate + 5'-deoxyadenosine + L-methionine + A + H(+). It functions in the pathway cofactor biosynthesis; molybdopterin biosynthesis. Functionally, catalyzes the cyclization of GTP to (8S)-3',8-cyclo-7,8-dihydroguanosine 5'-triphosphate. This is GTP 3',8-cyclase from Photorhabdus laumondii subsp. laumondii (strain DSM 15139 / CIP 105565 / TT01) (Photorhabdus luminescens subsp. laumondii).